A 150-amino-acid polypeptide reads, in one-letter code: uncharacterized protein (150 aa).

Residues 19 to 39 form a helical membrane-spanning segment; that stretch reads SLGMCVILIDGLIVLTAAFVF.

To B.subtilis YpjC, YqfU and YitT.

Its subcellular location is the cell membrane. This is an uncharacterized protein from Bacillus sp. (strain PS3).